The chain runs to 57 residues: Large ribosomal subunit protein bL32 (57 aa).

Basic residues predominate over residues 1–19; that stretch reads MAVPKRRMSRANTRSRRAQ. The interval 1–20 is disordered; that stretch reads MAVPKRRMSRANTRSRRAQW.

Belongs to the bacterial ribosomal protein bL32 family.

The chain is Large ribosomal subunit protein bL32 from Mycobacterium avium (strain 104).